Here is a 129-residue protein sequence, read N- to C-terminus: Small ribosomal subunit protein uS11 (129 aa).

This sequence belongs to the universal ribosomal protein uS11 family. As to quaternary structure, part of the 30S ribosomal subunit. Interacts with proteins S7 and S18. Binds to IF-3.

Functionally, located on the platform of the 30S subunit, it bridges several disparate RNA helices of the 16S rRNA. Forms part of the Shine-Dalgarno cleft in the 70S ribosome. The polypeptide is Small ribosomal subunit protein uS11 (Caulobacter vibrioides (strain ATCC 19089 / CIP 103742 / CB 15) (Caulobacter crescentus)).